Here is a 585-residue protein sequence, read N- to C-terminus: Mitochondrial sodium/calcium exchanger protein (585 aa).

The first 26 residues, 1–26 (MASRWLALLWAPVFLCVALILETASG), serve as a signal peptide directing secretion. Over 27 to 95 (TGDPSTKAHG…GIFCYFPPNL (69 aa)) the chain is Extracellular. Asparagine 46 carries an N-linked (GlcNAc...) asparagine glycan. Residues 96–116 (LPLAITLYVFWLLYLFLILGV) traverse the membrane as a helical segment. Over 117-140 (TAAKFFCPNLSAISTNLKLSHNVA) the chain is Cytoplasmic. Residues 141–161 (GVTFLAFGNGAPDIFSALVAF) traverse the membrane as a helical segment. Residues 162–168 (SDPRTAG) are Extracellular-facing. A helical membrane pass occupies residues 169–189 (LAIGALFGAGVLVTTVVAGGI). Residues 190–205 (TILHPFMAASRPFLRD) are Cytoplasmic-facing. Residues 206 to 226 (IAFYMVAVFLTFTALYLGRIT) traverse the membrane as a helical segment. Residues 227-229 (LTW) lie on the Extracellular side of the membrane. A helical membrane pass occupies residues 230–250 (ALGYLGLYVFYVVTVIICTWV). The Cytoplasmic segment spans residues 251 to 325 (YQRQRSRSLV…KWRTQSISWR (75 aa)). The residue at position 258 (serine 258) is a Phosphoserine; by PKA. A helical transmembrane segment spans residues 326–346 (VLKVVKLPVEFLLLLTVPVVD). Residues 347 to 360 (PDKDDRNWKRPLNC) lie on the Extracellular side of the membrane. The chain crosses the membrane as a helical span at residues 361–381 (LQLVISPLVLVLTLQSGVYGI). At 382 to 383 (YE) the chain is on the cytoplasmic side. The helical transmembrane segment at 384–404 (IGGLLPVWAVVVIVGTALASV) threads the bilayer. Residues 405–416 (TFFATSNREPPR) are Extracellular-facing. Residues 417–437 (LHWLFAFLGFLTSALWINAAA) form a helical membrane-spanning segment. At 438 to 445 (TEVVNILR) the chain is on the cytoplasmic side. A helical transmembrane segment spans residues 446–466 (SLGVIFRLSNTVLGLTLLAWG). The Extracellular segment spans residues 467 to 491 (NSIGDAFSDFTLARQGYPRMAFSAC). Residues 492-512 (FGGIIFNILVGVGLGCLLQII) form a helical membrane-spanning segment. At 513 to 525 (RNHVVEVKLEPDG) the chain is on the cytoplasmic side. The chain crosses the membrane as a helical span at residues 526 to 546 (LLVWVLASALGLSLIFSLVSV). Over 547 to 559 (PLQCFQLSKAYGL) the chain is Extracellular. The helical transmembrane segment at 560–580 (CLLLFYICFLVVVLLTEFGVI) threads the bilayer. Topologically, residues 581–585 (HLKKA) are cytoplasmic.

This sequence belongs to the Ca(2+):cation antiporter (CaCA) (TC 2.A.19) family. SLC24A subfamily. In terms of processing, phosphorylation at Ser-258 by PKA prevents calcium overload. In terms of tissue distribution, ubiquitously expressed. Expressed in dental tissues.

The protein localises to the mitochondrion inner membrane. It localises to the cell membrane. The catalysed reaction is Ca(2+)(in) + 3 Na(+)(out) = Ca(2+)(out) + 3 Na(+)(in). It carries out the reaction 3 Li(+)(out) + Ca(2+)(in) = 3 Li(+)(in) + Ca(2+)(out). Inhibited by the sodium/calcium exchanger inhibitor CGP-37157. Strongly inhibited by zinc. Mitochondrial sodium/calcium antiporter that mediates sodium-dependent calcium efflux from mitochondrion, by mediating the exchange of 3 sodium ions per 1 calcium ion. Plays a central role in mitochondrial calcium homeostasis by mediating mitochondrial calcium extrusion: calcium efflux is essential for mitochondrial function and cell survival, notably in cardiomyocytes. Regulates rates of glucose-dependent insulin secretion in pancreatic beta-cells during the first phase of insulin secretion: acts by mediating efflux of calcium from mitochondrion, thereby affecting cytoplasmic calcium responses. Required for store-operated Ca(2+) entry (SOCE) and Ca(2+) release-activated Ca(2+) (CRAC) channel regulation: sodium transport by SLC8B1 leads to promote calcium-shuttling that modulates mitochondrial redox status, thereby regulating SOCE activity. Involved in B-lymphocyte chemotaxis. Able to transport Ca(2+) in exchange of either Li(+) or Na(+), explaining how Li(+) catalyzes Ca(2+) exchange. In contrast to other members of the family its function is independent of K(+). The sequence is that of Mitochondrial sodium/calcium exchanger protein from Mus musculus (Mouse).